The primary structure comprises 121 residues: Holo-[acyl-carrier-protein] synthase (121 aa).

Mg(2+)-binding residues include Asp-8 and Glu-58.

The protein belongs to the P-Pant transferase superfamily. AcpS family. Mg(2+) serves as cofactor.

It is found in the cytoplasm. The enzyme catalyses apo-[ACP] + CoA = holo-[ACP] + adenosine 3',5'-bisphosphate + H(+). Transfers the 4'-phosphopantetheine moiety from coenzyme A to a Ser of acyl-carrier-protein. This is Holo-[acyl-carrier-protein] synthase from Bacillus velezensis (strain DSM 23117 / BGSC 10A6 / LMG 26770 / FZB42) (Bacillus amyloliquefaciens subsp. plantarum).